The chain runs to 377 residues: 4-hydroxy-3-methylbut-2-en-1-yl diphosphate synthase (flavodoxin) (377 aa).

[4Fe-4S] cluster-binding residues include Cys270, Cys273, Cys305, and Glu312.

This sequence belongs to the IspG family. [4Fe-4S] cluster is required as a cofactor.

The enzyme catalyses (2E)-4-hydroxy-3-methylbut-2-enyl diphosphate + oxidized [flavodoxin] + H2O + 2 H(+) = 2-C-methyl-D-erythritol 2,4-cyclic diphosphate + reduced [flavodoxin]. The protein operates within isoprenoid biosynthesis; isopentenyl diphosphate biosynthesis via DXP pathway; isopentenyl diphosphate from 1-deoxy-D-xylulose 5-phosphate: step 5/6. Functionally, converts 2C-methyl-D-erythritol 2,4-cyclodiphosphate (ME-2,4cPP) into 1-hydroxy-2-methyl-2-(E)-butenyl 4-diphosphate. This Bacillus subtilis (strain 168) protein is 4-hydroxy-3-methylbut-2-en-1-yl diphosphate synthase (flavodoxin).